A 244-amino-acid chain; its full sequence is Type III pantothenate kinase (244 aa).

8–15 (DQGNSACK) serves as a coordination point for ATP. Residue 94–97 (GADR) coordinates substrate. The Proton acceptor role is filled by Asp-96. Asp-117 serves as a coordination point for K(+). Thr-120 lines the ATP pocket. Residue Thr-175 coordinates substrate.

It belongs to the type III pantothenate kinase family. In terms of assembly, homodimer. NH4(+) serves as cofactor. It depends on K(+) as a cofactor.

The protein localises to the cytoplasm. The catalysed reaction is (R)-pantothenate + ATP = (R)-4'-phosphopantothenate + ADP + H(+). It participates in cofactor biosynthesis; coenzyme A biosynthesis; CoA from (R)-pantothenate: step 1/5. In terms of biological role, catalyzes the phosphorylation of pantothenate (Pan), the first step in CoA biosynthesis. The chain is Type III pantothenate kinase from Porphyromonas gingivalis (strain ATCC 33277 / DSM 20709 / CIP 103683 / JCM 12257 / NCTC 11834 / 2561).